The sequence spans 201 residues: Large ribosomal subunit protein bL25 (201 aa).

Belongs to the bacterial ribosomal protein bL25 family. CTC subfamily. Part of the 50S ribosomal subunit; part of the 5S rRNA/L5/L18/L25 subcomplex. Contacts the 5S rRNA. Binds to the 5S rRNA independently of L5 and L18.

Its function is as follows. This is one of the proteins that binds to the 5S RNA in the ribosome where it forms part of the central protuberance. The sequence is that of Large ribosomal subunit protein bL25 from Thiobacillus denitrificans (strain ATCC 25259 / T1).